The sequence spans 379 residues: Acyl-CoA dehydrogenase, short-chain specific (379 aa).

Belongs to the acyl-CoA dehydrogenase family. The cofactor is FAD.

It catalyses the reaction butanoyl-CoA + oxidized [electron-transfer flavoprotein] + H(+) = (2E)-butenoyl-CoA + reduced [electron-transfer flavoprotein]. It carries out the reaction a short-chain 2,3-saturated fatty acyl-CoA + oxidized [electron-transfer flavoprotein] + H(+) = a short-chain (2E)-enoyl-CoA + reduced [electron-transfer flavoprotein]. The protein operates within lipid metabolism; butanoate metabolism. In Clostridium acetobutylicum (strain ATCC 824 / DSM 792 / JCM 1419 / IAM 19013 / LMG 5710 / NBRC 13948 / NRRL B-527 / VKM B-1787 / 2291 / W), this protein is Acyl-CoA dehydrogenase, short-chain specific (bcd).